Here is a 358-residue protein sequence, read N- to C-terminus: Snurportin-1 (358 aa).

N-acetylmethionine is present on M1. Disordered stretches follow at residues 1 to 39 (MEELSQALASSFSVSQELNSTAAPHPRLSQYKSKYSSLE) and 69 to 89 (DWTGMESGEEEKKKDEEEMDL). The necessary for interaction with KPNB1 and m3G-cap U1 and U5 snRNP import receptor activity stretch occupies residues 1-65 (MEELSQALAS…LDYVNHARRL (65 aa)). A necessary for interaction with XPO1 region spans residues 1-160 (MEELSQALAS…NRFSSLLPGG (160 aa)). Composition is skewed to polar residues over residues 7–22 (ALASSFSVSQELNSTA) and 30–39 (QYKSKYSSLE). An IBB domain is found at 11–73 (SFSVSQELNS…RLAEDDWTGM (63 aa)). S75 carries the phosphoserine modification. Residues 128–130 (GKR) form an interaction with m3G-cap structure region. The necessary for binding to the m3G-cap structure stretch occupies residues 210–329 (MNSKLPEEEG…DTKEKLTHKA (120 aa)). The span at 315–341 (KRSQEDTKEKLTHKASENGHYELEHLS) shows a compositional bias: basic and acidic residues. A disordered region spans residues 315 to 358 (KRSQEDTKEKLTHKASENGHYELEHLSTPKLRSPPHSSESLMDS). The segment covering 349–358 (PHSSESLMDS) has biased composition (polar residues). The residue at position 351 (S351) is a Phosphoserine.

Belongs to the snurportin family. As to quaternary structure, component of an import snRNP complex composed of KPNB1, SNUPN, SMN1 and ZNF259. Component of a nuclear export receptor complex composed of KPNB1, Ran, SNUPN and XPO1. Found in a trimeric export complex with SNUPN, Ran and XPO1. Interacts (via IBB domain) with KPNB1; the interaction is direct. Interacts with DDX20, IPO7, SMN1, SNRPB and XPO1. Interacts directly with XPO1. Its interaction with XPO1 and binding to m3G-cap U snRNPs appears to be mutually exclusive. Can form homomers.

The protein localises to the nucleus. The protein resides in the cytoplasm. Functions as an U snRNP-specific nuclear import adapter. Involved in the trimethylguanosine (m3G)-cap-dependent nuclear import of U snRNPs. Binds specifically to the terminal m3G-cap U snRNAs. The polypeptide is Snurportin-1 (Snupn) (Rattus norvegicus (Rat)).